The chain runs to 212 residues: Tetraspanin-31-B (212 aa).

Residues 1–12 (MVCGGFTCSKNA) lie on the Cytoplasmic side of the membrane. A helical transmembrane segment spans residues 13–33 (LCALNVVYMLVGVLLIIVAAW). Topologically, residues 34–44 (GKGFGIVSSIH) are extracellular. A helical membrane pass occupies residues 45–65 (IIGGVIAIGVFLLLIAIIGLI). Residues 66-72 (GAVSHHQ) lie on the Cytoplasmic side of the membrane. The chain crosses the membrane as a helical span at residues 73–93 (VMLFIYMVVLILVFIFQFIVS). Residues 94–175 (CSCLAMNRSQ…MLNHADEALK (82 aa)) lie on the Extracellular side of the membrane. N-linked (GlcNAc...) asparagine glycosylation is found at Asn-100, Asn-109, Asn-117, and Asn-134. A helical membrane pass occupies residues 176–196 (ILGGVGLFFSFTEILGVWLAF). Topologically, residues 197–212 (RYRNQKDPRANPSAFL) are cytoplasmic.

Belongs to the tetraspanin (TM4SF) family.

The protein localises to the membrane. The chain is Tetraspanin-31-B (tspan31-b) from Xenopus laevis (African clawed frog).